A 321-amino-acid chain; its full sequence is Probable pectate lyase A (321 aa).

The signal sequence occupies residues 1–18; the sequence is MKFVATLIACGLSGLALA. Asn93 carries N-linked (GlcNAc...) asparagine glycosylation. Ca(2+) is bound by residues Asp134, Asp163, and Asp167. The active site involves Arg220. An N-linked (GlcNAc...) asparagine glycan is attached at Asn238.

This sequence belongs to the polysaccharide lyase 1 family. Ca(2+) is required as a cofactor.

The protein resides in the secreted. The catalysed reaction is Eliminative cleavage of (1-&gt;4)-alpha-D-galacturonan to give oligosaccharides with 4-deoxy-alpha-D-galact-4-enuronosyl groups at their non-reducing ends.. Pectinolytic enzyme consist of four classes of enzymes: pectin lyase, polygalacturonase, pectin methylesterase and rhamnogalacturonase. Among pectinolytic enzymes, pectin lyase is the most important in depolymerization of pectin, since it cleaves internal glycosidic bonds of highly methylated pectins. Favors pectate, the anion, over pectin, the methyl ester. This is Probable pectate lyase A (plyA) from Neosartorya fischeri (strain ATCC 1020 / DSM 3700 / CBS 544.65 / FGSC A1164 / JCM 1740 / NRRL 181 / WB 181) (Aspergillus fischerianus).